The sequence spans 277 residues: Uridine-cytidine kinase 1 (277 aa).

The interval 1–30 is disordered; sequence MASAGGEDCESPAPEADRPHQRPFLIGVSG. 30-38 contacts ATP; sequence GGTASGKST. Residue Asp-65 is part of the active site. 6 residues coordinate substrate: Asp-87, Tyr-115, His-120, Arg-169, Arg-178, and Gln-186. Asp-215 is a binding site for ATP. The disordered stretch occupies residues 247–277; that stretch reads SYKRTFSEPGDHPGMLTSGKRSHLESSSRPH. The residue at position 251 (Thr-251) is a Phosphothreonine. Residue Ser-253 is modified to Phosphoserine. The segment covering 268–277 has biased composition (basic and acidic residues); the sequence is SHLESSSRPH.

This sequence belongs to the uridine kinase family. Ubiquitous.

It carries out the reaction uridine + ATP = UMP + ADP + H(+). The enzyme catalyses cytidine + ATP = CMP + ADP + H(+). It participates in pyrimidine metabolism; CTP biosynthesis via salvage pathway; CTP from cytidine: step 1/3. Its pathway is pyrimidine metabolism; UMP biosynthesis via salvage pathway; UMP from uridine: step 1/1. Its function is as follows. Phosphorylates uridine and cytidine to uridine monophosphate and cytidine monophosphate. Does not phosphorylate deoxyribonucleosides or purine ribonucleosides. Can use ATP or GTP as a phosphate donor. Can also phosphorylate cytidine and uridine nucleoside analogs such as 6-azauridine, 5-fluorouridine, 4-thiouridine, 5-bromouridine, N(4)-acetylcytidine, N(4)-benzoylcytidine, 5-fluorocytidine, 2-thiocytidine, 5-methylcytidine, and N(4)-anisoylcytidine. The chain is Uridine-cytidine kinase 1 (UCK1) from Homo sapiens (Human).